A 156-amino-acid polypeptide reads, in one-letter code: Transcriptional repressor NrdR (156 aa).

A zinc finger spans residues 3–34 (CPYCRHPDSRVVDSREAEEGAAIRRRRSCPNC). An ATP-cone domain is found at 46 to 136 (LSVVKRSGVT…VYRSFTSAED (91 aa)).

It belongs to the NrdR family. Requires Zn(2+) as cofactor.

In terms of biological role, negatively regulates transcription of bacterial ribonucleotide reductase nrd genes and operons by binding to NrdR-boxes. The polypeptide is Transcriptional repressor NrdR (Nocardia farcinica (strain IFM 10152)).